The primary structure comprises 142 residues: Large ribosomal subunit protein uL11 (142 aa).

This sequence belongs to the universal ribosomal protein uL11 family. Part of the ribosomal stalk of the 50S ribosomal subunit. Interacts with L10 and the large rRNA to form the base of the stalk. L10 forms an elongated spine to which L12 dimers bind in a sequential fashion forming a multimeric L10(L12)X complex. One or more lysine residues are methylated.

In terms of biological role, forms part of the ribosomal stalk which helps the ribosome interact with GTP-bound translation factors. The protein is Large ribosomal subunit protein uL11 of Dichelobacter nodosus (strain VCS1703A).